The primary structure comprises 58 residues: Ribosome modulation factor (58 aa).

Residues 1–14 (MKRQKRDKLTRAHS) show a composition bias toward basic residues. The interval 1-25 (MKRQKRDKLTRAHSKGYQAGISGRS) is disordered.

This sequence belongs to the ribosome modulation factor family.

It localises to the cytoplasm. Its function is as follows. During stationary phase, converts 70S ribosomes to an inactive dimeric form (100S ribosomes). This Alteromonas naphthalenivorans protein is Ribosome modulation factor.